Consider the following 143-residue polypeptide: Ribosome maturation factor RimP (143 aa).

It belongs to the RimP family.

The protein resides in the cytoplasm. In terms of biological role, required for maturation of 30S ribosomal subunits. This chain is Ribosome maturation factor RimP, found in Borrelia hermsii (strain HS1 / DAH).